The sequence spans 880 residues: Nonsense-mediated mRNA decay factor SMG7-like (880 aa).

TPR repeat units follow at residues 149 to 183 and 184 to 217; these read QEQYLKAHEHPNWSTAATYYLEAAKSWPDSGNPHN and QLAVLATYVSDELLALYHCVRSLAVKEPFPGASN. The interval 669–711 is disordered; sequence RLGLSKPNGLGPIDETGPVSAFDSLSINSSTEHPASSYSPPTP. Residues 691–701 show a composition bias toward polar residues; that stretch reads DSLSINSSTEH.

Its function is as follows. May play a role in growth and development. In Arabidopsis thaliana (Mouse-ear cress), this protein is Nonsense-mediated mRNA decay factor SMG7-like.